Here is a 231-residue protein sequence, read N- to C-terminus: 7-cyano-7-deazaguanine synthase (231 aa).

Residue 8 to 18 (FSGGQDSTTCL) participates in ATP binding. Residues cysteine 188, cysteine 197, cysteine 200, and cysteine 203 each contribute to the Zn(2+) site.

The protein belongs to the QueC family. Zn(2+) is required as a cofactor.

It carries out the reaction 7-carboxy-7-deazaguanine + NH4(+) + ATP = 7-cyano-7-deazaguanine + ADP + phosphate + H2O + H(+). It participates in purine metabolism; 7-cyano-7-deazaguanine biosynthesis. Functionally, catalyzes the ATP-dependent conversion of 7-carboxy-7-deazaguanine (CDG) to 7-cyano-7-deazaguanine (preQ(0)). This Escherichia fergusonii (strain ATCC 35469 / DSM 13698 / CCUG 18766 / IAM 14443 / JCM 21226 / LMG 7866 / NBRC 102419 / NCTC 12128 / CDC 0568-73) protein is 7-cyano-7-deazaguanine synthase.